Reading from the N-terminus, the 352-residue chain is N-acetyl-gamma-glutamyl-phosphate reductase (352 aa).

Cys156 is an active-site residue.

The protein belongs to the NAGSA dehydrogenase family. Type 1 subfamily.

The protein localises to the cytoplasm. It catalyses the reaction N-acetyl-L-glutamate 5-semialdehyde + phosphate + NADP(+) = N-acetyl-L-glutamyl 5-phosphate + NADPH + H(+). It functions in the pathway amino-acid biosynthesis; L-arginine biosynthesis; N(2)-acetyl-L-ornithine from L-glutamate: step 3/4. Catalyzes the NADPH-dependent reduction of N-acetyl-5-glutamyl phosphate to yield N-acetyl-L-glutamate 5-semialdehyde. This Afipia carboxidovorans (strain ATCC 49405 / DSM 1227 / KCTC 32145 / OM5) (Oligotropha carboxidovorans) protein is N-acetyl-gamma-glutamyl-phosphate reductase.